The chain runs to 199 residues: Ras-related and estrogen-regulated growth inhibitor (199 aa).

GTP contacts are provided by residues 13–20 (GRAGVGKS), 60–64 (DTAGQ), and 118–121 (NKAD).

The protein belongs to the small GTPase superfamily. Ras family.

It is found in the cytoplasm. The catalysed reaction is GTP + H2O = GDP + phosphate + H(+). Binds GDP/GTP and possesses intrinsic GTPase activity. Has higher affinity for GDP than for GTP. In Bos taurus (Bovine), this protein is Ras-related and estrogen-regulated growth inhibitor (RERG).